A 371-amino-acid chain; its full sequence is 3-isopropylmalate dehydrogenase (371 aa).

4 residues coordinate substrate: Arg-104, Arg-114, Arg-142, and Asp-232. 3 residues coordinate Mg(2+): Asp-232, Asp-256, and Asp-260. 290–302 contributes to the NAD(+) binding site; sequence GSAPDIAGQDKAN.

It belongs to the isocitrate and isopropylmalate dehydrogenases family. LeuB type 1 subfamily. In terms of assembly, homodimer. The cofactor is Mg(2+). Mn(2+) serves as cofactor.

It localises to the cytoplasm. The enzyme catalyses (2R,3S)-3-isopropylmalate + NAD(+) = 4-methyl-2-oxopentanoate + CO2 + NADH. It functions in the pathway amino-acid biosynthesis; L-leucine biosynthesis; L-leucine from 3-methyl-2-oxobutanoate: step 3/4. Its function is as follows. Catalyzes the oxidation of 3-carboxy-2-hydroxy-4-methylpentanoate (3-isopropylmalate) to 3-carboxy-4-methyl-2-oxopentanoate. The product decarboxylates to 4-methyl-2 oxopentanoate. The sequence is that of 3-isopropylmalate dehydrogenase from Synechococcus sp. (strain JA-2-3B'a(2-13)) (Cyanobacteria bacterium Yellowstone B-Prime).